Here is a 465-residue protein sequence, read N- to C-terminus: Pancreatic triacylglycerol lipase (465 aa).

The first 16 residues, 1–16 (MLLVWSLALLLGAVAG), serve as a signal peptide directing secretion. Intrachain disulfides connect Cys-20/Cys-26 and Cys-107/Cys-118. The active-site Nucleophile is the Ser-169. The active-site Charge relay system is the Asp-193. The Ca(2+) site is built by Glu-204, Arg-207, Asp-209, and Asp-212. Cys-254 and Cys-278 form a disulfide bridge. His-280 functions as the Charge relay system in the catalytic mechanism. Disulfide bonds link Cys-302–Cys-313, Cys-316–Cys-321, and Cys-449–Cys-465. The region spanning 355–465 (WRYKVSVTLS…EDVLLTLNAC (111 aa)) is the PLAT domain.

Belongs to the AB hydrolase superfamily. Lipase family. As to quaternary structure, forms a 1:1 stoichiometric complex with (pro)colipase/CLPS. In terms of tissue distribution, expressed in many tissues with highest expression in liver. During hibernation there is a significant increases in expression in heart, white adipose tissue (WAT), and testis; but not in pancreas.

It is found in the secreted. It carries out the reaction a triacylglycerol + H2O = a diacylglycerol + a fatty acid + H(+). The enzyme catalyses 1,2,3-tributanoylglycerol + H2O = dibutanoylglycerol + butanoate + H(+). The catalysed reaction is 1,2,3-tri-(9Z-octadecenoyl)-glycerol + H2O = di-(9Z)-octadecenoylglycerol + (9Z)-octadecenoate + H(+). It catalyses the reaction all-trans-retinyl hexadecanoate + H2O = all-trans-retinol + hexadecanoate + H(+). It carries out the reaction 1,2-di-(9Z-octadecenoyl)-glycerol + H2O = (9Z-octadecenoyl)-glycerol + (9Z)-octadecenoate + H(+). With respect to regulation, inhibited by bile salts, is reactivated by (pro)colipase/CLPS. In terms of biological role, plays an important role in fat metabolism. It preferentially splits the esters of long-chain fatty acids at positions 1 and 3, producing mainly 2-monoacylglycerol and free fatty acids, and shows considerably higher activity against insoluble emulsified substrates than against soluble ones. Plays a role in hibernation as a key enzyme that shows high activity at low temperatures. When expressed in the hibernating heart it liberates fatty acids from triglycerides at temperatures as low as 0 degrees Celsius. In Ictidomys tridecemlineatus (Thirteen-lined ground squirrel), this protein is Pancreatic triacylglycerol lipase (PNLIP).